Reading from the N-terminus, the 192-residue chain is Signal peptidase complex catalytic subunit SEC11C (192 aa).

Over 1 to 28 (MVRAGAVGTHLPTSSLDIFGDLRKMNKR) the chain is Cytoplasmic. Residues 29–48 (QLYYQVLNFAMIVSSALMIW) traverse the membrane as a helical; Signal-anchor for type II membrane protein segment. At 49–192 (KGLIVLTGSE…GAYVLLKRES (144 aa)) the chain is on the lumenal side. Catalysis depends on charge relay system residues Ser-68, His-108, and Asp-134. The C-terminal short (CTS) helix stretch occupies residues 177 to 188 (ALLAVMGAYVLL).

Belongs to the peptidase S26B family. Component of the signal peptidase complex paralog C (SPC-C) composed of a catalytic subunit SEC11C and three accessory subunits SPCS1, SPCS2 and SPCS3. Within the complex, interacts with SPCS2 and SPCS3. The complex induces a local thinning of the ER membrane which is used to measure the length of the signal peptide (SP) h-region of protein substrates. This ensures the selectivity of the complex towards h-regions shorter than 18-20 amino acids. May undergo processing at the N-terminus.

Its subcellular location is the endoplasmic reticulum membrane. It carries out the reaction Cleavage of hydrophobic, N-terminal signal or leader sequences from secreted and periplasmic proteins.. Its function is as follows. Catalytic component of the signal peptidase complex (SPC) which catalyzes the cleavage of N-terminal signal sequences from nascent proteins as they are translocated into the lumen of the endoplasmic reticulum. Specifically cleaves N-terminal signal peptides that contain a hydrophobic alpha-helix (h-region) shorter than 18-20 amino acids. The chain is Signal peptidase complex catalytic subunit SEC11C (Sec11c) from Mus musculus (Mouse).